A 418-amino-acid chain; its full sequence is Tyrosine--tRNA ligase (418 aa).

Tyr34 is a binding site for L-tyrosine. Residues 39-48 (PTADSLHLGH) carry the 'HIGH' region motif. Residues Tyr169 and Gln173 each coordinate L-tyrosine. A 'KMSKS' region motif is present at residues 229–233 (KFGKS). ATP is bound at residue Lys232. Residues 352–418 (HNIVEILVAA…GKKKYAVLTY (67 aa)) enclose the S4 RNA-binding domain.

The protein belongs to the class-I aminoacyl-tRNA synthetase family. TyrS type 1 subfamily. In terms of assembly, homodimer.

It localises to the cytoplasm. The enzyme catalyses tRNA(Tyr) + L-tyrosine + ATP = L-tyrosyl-tRNA(Tyr) + AMP + diphosphate + H(+). Functionally, catalyzes the attachment of tyrosine to tRNA(Tyr) in a two-step reaction: tyrosine is first activated by ATP to form Tyr-AMP and then transferred to the acceptor end of tRNA(Tyr). This Streptococcus pyogenes serotype M49 (strain NZ131) protein is Tyrosine--tRNA ligase.